The primary structure comprises 328 residues: D-cysteine desulfhydrase (328 aa).

Lys51 carries the N6-(pyridoxal phosphate)lysine modification.

The protein belongs to the ACC deaminase/D-cysteine desulfhydrase family. As to quaternary structure, homodimer. The cofactor is pyridoxal 5'-phosphate.

The catalysed reaction is D-cysteine + H2O = hydrogen sulfide + pyruvate + NH4(+) + H(+). Its function is as follows. Catalyzes the alpha,beta-elimination reaction of D-cysteine and of several D-cysteine derivatives. It could be a defense mechanism against D-cysteine. This chain is D-cysteine desulfhydrase, found in Salmonella schwarzengrund (strain CVM19633).